Here is a 237-residue protein sequence, read N- to C-terminus: Protein GrpE (237 aa).

Positions 1–65 (MTDSYKLPDN…DAREDDRDPT (65 aa)) are disordered. Residues 55-65 (VDAREDDRDPT) show a composition bias toward basic and acidic residues.

This sequence belongs to the GrpE family. As to quaternary structure, homodimer.

Its subcellular location is the cytoplasm. Functionally, participates actively in the response to hyperosmotic and heat shock by preventing the aggregation of stress-denatured proteins, in association with DnaK and GrpE. It is the nucleotide exchange factor for DnaK and may function as a thermosensor. Unfolded proteins bind initially to DnaJ; upon interaction with the DnaJ-bound protein, DnaK hydrolyzes its bound ATP, resulting in the formation of a stable complex. GrpE releases ADP from DnaK; ATP binding to DnaK triggers the release of the substrate protein, thus completing the reaction cycle. Several rounds of ATP-dependent interactions between DnaJ, DnaK and GrpE are required for fully efficient folding. This Corynebacterium efficiens (strain DSM 44549 / YS-314 / AJ 12310 / JCM 11189 / NBRC 100395) protein is Protein GrpE.